The primary structure comprises 115 residues: Large ribosomal subunit protein bL20c (115 aa).

Belongs to the bacterial ribosomal protein bL20 family.

The protein localises to the plastid. It localises to the chloroplast. Functionally, binds directly to 23S ribosomal RNA and is necessary for the in vitro assembly process of the 50S ribosomal subunit. It is not involved in the protein synthesizing functions of that subunit. The protein is Large ribosomal subunit protein bL20c of Emiliania huxleyi (Coccolithophore).